The following is a 275-amino-acid chain: Putative methylglyoxal reductase DkgA (275 aa).

The active-site Proton donor is the Tyr51. Residue His107 participates in substrate binding. 187 to 241 (SPLAQGGEGVFDQKVIRELADKYGKTPAQIVIRWHLDCGLVVIPKSVTPSRIAEN) contacts NADP(+).

This sequence belongs to the aldo/keto reductase family. Monomer.

The protein localises to the cytoplasm. It carries out the reaction hydroxyacetone + NADP(+) = methylglyoxal + NADPH + H(+). Functionally, aldo-keto reductase that significantly contributes to cellular methylglyoxal detoxification by catalyzing the NADPH-dependent conversion of methylglyoxal to acetol. The sequence is that of Putative methylglyoxal reductase DkgA from Salmonella typhi.